Reading from the N-terminus, the 383-residue chain is Succinyl-diaminopimelate desuccinylase (383 aa).

Histidine 74 serves as a coordination point for Zn(2+). Aspartate 76 is an active-site residue. Residue aspartate 107 coordinates Zn(2+). Glutamate 141 serves as the catalytic Proton acceptor. Residues glutamate 142, glutamate 170, and histidine 356 each coordinate Zn(2+).

It belongs to the peptidase M20A family. DapE subfamily. Homodimer. Zn(2+) is required as a cofactor. It depends on Co(2+) as a cofactor.

The catalysed reaction is N-succinyl-(2S,6S)-2,6-diaminopimelate + H2O = (2S,6S)-2,6-diaminopimelate + succinate. It functions in the pathway amino-acid biosynthesis; L-lysine biosynthesis via DAP pathway; LL-2,6-diaminopimelate from (S)-tetrahydrodipicolinate (succinylase route): step 3/3. Functionally, catalyzes the hydrolysis of N-succinyl-L,L-diaminopimelic acid (SDAP), forming succinate and LL-2,6-diaminopimelate (DAP), an intermediate involved in the bacterial biosynthesis of lysine and meso-diaminopimelic acid, an essential component of bacterial cell walls. The chain is Succinyl-diaminopimelate desuccinylase from Cupriavidus pinatubonensis (strain JMP 134 / LMG 1197) (Cupriavidus necator (strain JMP 134)).